A 220-amino-acid polypeptide reads, in one-letter code: Thiopurine S-methyltransferase (220 aa).

W10, L45, E66, and R123 together coordinate S-adenosyl-L-methionine.

The protein belongs to the class I-like SAM-binding methyltransferase superfamily. TPMT family.

The protein resides in the cytoplasm. It carries out the reaction S-adenosyl-L-methionine + a thiopurine = S-adenosyl-L-homocysteine + a thiopurine S-methylether.. This chain is Thiopurine S-methyltransferase, found in Nitrosomonas eutropha (strain DSM 101675 / C91 / Nm57).